A 274-amino-acid polypeptide reads, in one-letter code: 3-methyl-2-oxobutanoate hydroxymethyltransferase (274 aa).

2 residues coordinate Mg(2+): aspartate 49 and aspartate 88. 3-methyl-2-oxobutanoate contacts are provided by residues aspartate 49–serine 50, aspartate 88, and lysine 118. Glutamate 120 contacts Mg(2+). Glutamate 187 functions as the Proton acceptor in the catalytic mechanism.

It belongs to the PanB family. In terms of assembly, homodecamer; pentamer of dimers. Mg(2+) serves as cofactor.

Its subcellular location is the cytoplasm. The enzyme catalyses 3-methyl-2-oxobutanoate + (6R)-5,10-methylene-5,6,7,8-tetrahydrofolate + H2O = 2-dehydropantoate + (6S)-5,6,7,8-tetrahydrofolate. Its pathway is cofactor biosynthesis; (R)-pantothenate biosynthesis; (R)-pantoate from 3-methyl-2-oxobutanoate: step 1/2. Catalyzes the reversible reaction in which hydroxymethyl group from 5,10-methylenetetrahydrofolate is transferred onto alpha-ketoisovalerate to form ketopantoate. This Allorhizobium ampelinum (strain ATCC BAA-846 / DSM 112012 / S4) (Agrobacterium vitis (strain S4)) protein is 3-methyl-2-oxobutanoate hydroxymethyltransferase.